The chain runs to 224 residues: Aminopyrimidine aminohydrolase (224 aa).

Position 44 (Asp44) interacts with substrate. Cys135 (nucleophile) is an active-site residue. Substrate is bound by residues Tyr139 and Tyr165. Catalysis depends on Glu207, which acts as the Proton donor.

Belongs to the TenA family. As to quaternary structure, homotetramer.

The catalysed reaction is 4-amino-5-aminomethyl-2-methylpyrimidine + H2O = 4-amino-5-hydroxymethyl-2-methylpyrimidine + NH4(+). It catalyses the reaction thiamine + H2O = 5-(2-hydroxyethyl)-4-methylthiazole + 4-amino-5-hydroxymethyl-2-methylpyrimidine + H(+). It participates in cofactor biosynthesis; thiamine diphosphate biosynthesis. Catalyzes an amino-pyrimidine hydrolysis reaction at the C5' of the pyrimidine moiety of thiamine compounds, a reaction that is part of a thiamine salvage pathway. Thus, catalyzes the conversion of 4-amino-5-aminomethyl-2-methylpyrimidine to 4-amino-5-hydroxymethyl-2-methylpyrimidine (HMP). To a lesser extent, is also able to catalyze the hydrolytic cleavage of thiamine; however, this thiaminase activity is unlikely to be physiologically relevant. Therefore, is involved in the regeneration of the thiamine pyrimidine from thiamine degraded products present in the environment, rather than in thiamine degradation. This chain is Aminopyrimidine aminohydrolase, found in Halalkalibacterium halodurans (strain ATCC BAA-125 / DSM 18197 / FERM 7344 / JCM 9153 / C-125) (Bacillus halodurans).